Here is an 81-residue protein sequence, read N- to C-terminus: Small ribosomal subunit protein bS16 (81 aa).

Belongs to the bacterial ribosomal protein bS16 family.

This is Small ribosomal subunit protein bS16 from Nautilia profundicola (strain ATCC BAA-1463 / DSM 18972 / AmH).